Consider the following 247-residue polypeptide: MSHDPDRLFAQPLARVQDFVFNEDVARVFPDMIKRSVPGYPTIVENIGVIAAQFAQPNTRLYDLGCSLGAVTQALRRHVSQDNCQVIAVDNSTAMVERCREYLHAQDSMYQELLPVEVLEADILALEFQSSSLVALNFTLQFIAPEQRPALLGRIRQALVPGGALILSEKLRFEDDEEQQLLTDLHIAFKRANGYSELEIAQKRSAIENVMKPDSLETHRQRLLEAGFSKVVPWFQCLNFASLIALP.

S-adenosyl-L-methionine-binding positions include tyrosine 40, 65–67 (GCS), 90–91 (DN), 122–123 (DI), asparagine 137, and arginine 204.

It belongs to the class I-like SAM-binding methyltransferase superfamily. Cx-SAM synthase family. As to quaternary structure, homodimer.

It catalyses the reaction prephenate + S-adenosyl-L-methionine = carboxy-S-adenosyl-L-methionine + 3-phenylpyruvate + H2O. In terms of biological role, catalyzes the conversion of S-adenosyl-L-methionine (SAM) to carboxy-S-adenosyl-L-methionine (Cx-SAM). The protein is Carboxy-S-adenosyl-L-methionine synthase of Stutzerimonas stutzeri (strain A1501) (Pseudomonas stutzeri).